Here is a 389-residue protein sequence, read N- to C-terminus: Chalcone synthase 1 (389 aa).

The active site involves C163.

It belongs to the thiolase-like superfamily. Chalcone/stilbene synthases family.

The catalysed reaction is (E)-4-coumaroyl-CoA + 3 malonyl-CoA + 3 H(+) = 2',4,4',6'-tetrahydroxychalcone + 3 CO2 + 4 CoA. It functions in the pathway secondary metabolite biosynthesis; flavonoid biosynthesis. Functionally, the primary product of this enzyme is 4,2',4',6'-tetrahydroxychalcone (also termed naringenin-chalcone or chalcone) which can under specific conditions spontaneously isomerize into naringenin. The chain is Chalcone synthase 1 (CHS1) from Citrus sinensis (Sweet orange).